A 197-amino-acid polypeptide reads, in one-letter code: C-type lectin domain family 3 member A (197 aa).

An N-terminal signal peptide occupies residues 1–22; that stretch reads MAKNGLVICILVITLLLDQTTS. 3 cysteine pairs are disulfide-bonded: Cys68/Cys78, Cys95/Cys191, and Cys167/Cys183. Residues 74-192 form the C-type lectin domain; it reads VHKKCYLASE…CRSSKRYICE (119 aa).

As to expression, restricted to cartilage and breast. Also expressed in breast cancers.

It localises to the secreted. In terms of biological role, promotes cell adhesion to laminin-332 and fibronectin. The protein is C-type lectin domain family 3 member A (CLEC3A) of Homo sapiens (Human).